Reading from the N-terminus, the 190-residue chain is Large ribosomal subunit protein eL15 (190 aa).

Belongs to the eukaryotic ribosomal protein eL15 family.

The polypeptide is Large ribosomal subunit protein eL15 (rpl15e) (Nanoarchaeum equitans (strain Kin4-M)).